We begin with the raw amino-acid sequence, 137 residues long: Large ribosomal subunit protein uL16 (137 aa).

It belongs to the universal ribosomal protein uL16 family. As to quaternary structure, part of the 50S ribosomal subunit.

Functionally, binds 23S rRNA and is also seen to make contacts with the A and possibly P site tRNAs. In Azotobacter vinelandii (strain DJ / ATCC BAA-1303), this protein is Large ribosomal subunit protein uL16.